We begin with the raw amino-acid sequence, 362 residues long: Acetylajmalan esterase 2 (362 aa).

Residues 1–23 form the signal peptide; sequence MGFAARPFHIVFSLFVLAGATQA. The Nucleophile role is filled by Ser38. N-linked (GlcNAc...) asparagine glycosylation is found at Asn100, Asn118, Asn151, and Asn202. Catalysis depends on residues Asp335 and His338.

Belongs to the 'GDSL' lipolytic enzyme family. As to expression, confined to roots.

It catalyses the reaction 17-O-acetylnorajmaline + H2O = norajmaline + acetate + H(+). It carries out the reaction 17-O-acetylajmaline + H2O = ajmaline + acetate + H(+). The protein operates within alkaloid biosynthesis; ajmaline biosynthesis. Functionally, acetylesterase involved in the biosynthesis of ajmaline-type monoterpenoid indole alkaloids (MIAs) natural products, important plant-derived pharmaceuticals used in the therapy of heart disorders. Deacetylates 17-O-acetylnorajmaline to produce norajmaline. May also catalyze the conversion of 17-O-acetylajmaline to ajmaline. The chain is Acetylajmalan esterase 2 from Rauvolfia serpentina (Serpentine wood).